An 803-amino-acid chain; its full sequence is Ras GTPase-activating protein 4 (803 aa).

C2 domains lie at 1–105 (MAKR…SGWA) and 116–232 (VQGE…EGWF). Residues Asp21, Asp27, Asp74, Asp76, Ser79, Asp82, Asp149, Asp155, Asp202, Asp204, Ser207, and Asp210 each contribute to the Ca(2+) site. The Ras-GAP domain maps to 318 to 546 (GLAKDFLDLL…AQLKDFITKL (229 aa)). The PH domain maps to 566–673 (PPVKEGPLFI…WLSALRKVSI (108 aa)). The segment at 675 to 711 (NTGLLGSYHPGVFRGDKWSCCHQKEKTGQGCDKTRSR) adopts a Btk-type zinc-finger fold. Zn(2+) is bound by residues His683, Cys694, Cys695, and Cys705. Residues 781–803 (EAHSSSPAGSPPSEPNCLLELQT) are disordered.

Ca(2+) is required as a cofactor. In terms of tissue distribution, widely expressed.

It localises to the cytoplasm. Its subcellular location is the cytosol. It is found in the cell membrane. Functionally, ca(2+)-dependent Ras GTPase-activating protein, that switches off the Ras-MAPK pathway following a stimulus that elevates intracellular calcium. Functions as an adaptor for Cdc42 and Rac1 during FcR-mediated phagocytosis. The protein is Ras GTPase-activating protein 4 (RASA4) of Homo sapiens (Human).